A 1615-amino-acid polypeptide reads, in one-letter code: MSMSQSALIKEEISSVSFQFYTSDDVRKLSVKQIVEIESFDMLGGPVPGGLHDPALGPTGPAERCATCSLDFIECPGHFGHIELAIPCYNPVSFQTIFKLLKNKCFHCHHFKHGKPIINQFIEELTLLFKGDVVKARNLRERNVLLRGYEEKKKGKSNEEGEEVMESDESDSDKMDTDENKTNGKIICDGVFNAKEIYSGKATHIEDFKREVFKEFFGSFSGYAIPCGNCGAYSPRLRNGDASKSKLFIMPLHDKYATKNSAIKLPTNFSSVKEQTEHGTWFAPWEVLDNMKKLFENEKEILDMLLGHLVPIVTNKGGAKKNVGRQFTKESNVDSLFMRVFPVTPARYRPPNFVNGRRSEHPQNSHYKGMVKSNKMIRQSIDAGEGKAKFLVNSVCDLQMHVNNMYDNSKSNSNTNEVANGIKQILEKKEGLFRKHMMGKRVNYAARTVISPDISLETNEMGVPQYFAKTLTFPQPVTSFNYNQLAQAVINGPEQYPGANFIEDENGHLINLSKESQEKRIALSKTLLTSHPHAPRGVNKKVYRHLLSGDYVLANRQPTLHKPGIMGHRVKVLGKNEKTLRMHYSNCSTYNADFDGDEMNIHFPQSLLASAEIREICANNYQYLVPRNGAPLRGLIQDHILTGVLLTKRDTLFTKADFQAILYASCWSVNTKHPIVTPPPCILKPVPLWSGKQLISAALNQLTIGRAPLNLEAPSKIPTKMWGTKGLEITRDSHVIIRQNEMVAGILDKGHFGASSYGLVHTCYELYDPDVAGSLLTLLGRMFTNYLQSRGFTCGVDDLLMKNKEEKFRVETLKKANEEGYTVAAKFADLSKYDEQKARDFFSKALQSEREVARLDGLLKKGLNQYTSKVIDTLIPGGQQKPFPKNNFSLMTVSGAKGSVVNFSQVSCLLGQQELEGKRVPRMVSGKTLPSFQAYDASARAGGFVMDRFLTGVRPQDYFFHCMAGREGLIDTAVKTSRSGYLQRCLIKHLEGLSVQYDNTVRESDGSVIQFNYGEDSLEIGKTPYLTKFPIIAENYELFKSQFPMEQLIEQLKNQEVVEYNRSIKTQPELDPVMSKFNPSSDLGCVSESFMNQLNHYIESNPQKLIKTTSNRDGKINEKDFRNLMYLYYSRSMVSPGESVGLLCAQSIGEPSTQMTLNTFHLAGRGEANVTLGIPRLRELIMTATTKPITPLMEFQINDSTNKVETEKMAKYLEILKLSDIIKDITVQEYFQDTNRNYDIEIEFIPTLQQVLSLHRIKEKQLNKLFGEFNKVIKRQVKSQGKLKVNNGDIGLGSKVRGSDLVEDDSLTINDDDAPANDDTTNNDENTSQQQPSSQNKKSKSKVITQDDDSVAAKSKNKKKQNVNYEDGEEEAEEKDSDEGESEAEESDDKSDVDSDSDEISNSRSSNSFSDESIEFDQKKLTFTISVASDSKKVLMLGIVETEASKFVLKSCKGITRCFVNEKQVGGKTHYSIQSEGVNLSEIFELRDKLKIDEIYTNDIYAILQKYGVEACRQAVTSEISNVFAAYGISVDKRHLILLGDYMTFEGGYRALNRIGIENNTSPFQKMSFETTFSFLSKASLMGDYDTVTSPSSRIVLGQIVKNGTGSFTIVAPVK.

Residues C65, C68, C75, and H78 each coordinate Zn(2+). A disordered region spans residues 155–181 (GKSNEEGEEVMESDESDSDKMDTDENK). The span at 160-171 (EGEEVMESDESD) shows a compositional bias: acidic residues. The span at 172–181 (SDKMDTDENK) shows a compositional bias: basic and acidic residues. The Mg(2+) site is built by D593, D595, and D597. Residues 955 to 967 (PQDYFFHCMAGRE) are bridging helix. A compositionally biased stretch (acidic residues) spans 1305–1316 (DSLTINDDDAPA). Positions 1305-1411 (DSLTINDDDA…NSRSSNSFSD (107 aa)) are disordered. Over residues 1317–1336 (NDDTTNNDENTSQQQPSSQN) the composition is skewed to low complexity. A compositionally biased stretch (acidic residues) spans 1366 to 1399 (EDGEEEAEEKDSDEGESEAEESDDKSDVDSDSDE). Residues 1400–1411 (ISNSRSSNSFSD) are compositionally biased toward low complexity.

It belongs to the RNA polymerase beta' chain family. In terms of assembly, component of the RNA polymerase I (Pol I) complex consisting of at least 13 subunits.

The protein resides in the nucleus. The catalysed reaction is RNA(n) + a ribonucleoside 5'-triphosphate = RNA(n+1) + diphosphate. Functionally, DNA-dependent RNA polymerase catalyzes the transcription of DNA into RNA using the four ribonucleoside triphosphates as substrates. Largest and catalytic core component of RNA polymerase I which synthesizes ribosomal RNA precursors. Forms the polymerase active center together with the second largest subunit. A single stranded DNA template strand of the promoter is positioned within the central active site cleft of Pol I. A bridging helix emanates from RPA1 and crosses the cleft near the catalytic site and is thought to promote translocation of Pol I by acting as a ratchet that moves the RNA-DNA hybrid through the active site by switching from straight to bent conformations at each step of nucleotide addition. This is DNA-directed RNA polymerase I subunit rpa1 (polr1a) from Dictyostelium discoideum (Social amoeba).